The chain runs to 450 residues: Enolase (450 aa).

Gln-167 is a binding site for (2R)-2-phosphoglycerate. Catalysis depends on Glu-209, which acts as the Proton donor. 3 residues coordinate Mg(2+): Asp-250, Glu-307, and Asp-334. (2R)-2-phosphoglycerate-binding residues include Lys-359, Arg-388, Ser-389, and Lys-410. Residue Lys-359 is the Proton acceptor of the active site.

Belongs to the enolase family. Requires Mg(2+) as cofactor.

The protein localises to the cytoplasm. The protein resides in the secreted. It localises to the cell surface. It carries out the reaction (2R)-2-phosphoglycerate = phosphoenolpyruvate + H2O. Its pathway is carbohydrate degradation; glycolysis; pyruvate from D-glyceraldehyde 3-phosphate: step 4/5. Catalyzes the reversible conversion of 2-phosphoglycerate (2-PG) into phosphoenolpyruvate (PEP). It is essential for the degradation of carbohydrates via glycolysis. In terms of biological role, 'Moonlights' as a plasminogen receptor and plasmin activator. Contributes to host (pig) cell adhesion; anti-enolase antibodies decrease binding to porcine kidney cells about 60%. Binds host plasminogen and fibronectin in vitro; enhances the activity of host tissue-specific plasminogen activator (tPA), and helps plasminogen and tPA degrade articifial host extracellular matrices. In Mesomycoplasma hyorhinis (strain HUB-1) (Mycoplasma hyorhinis), this protein is Enolase.